Consider the following 410-residue polypeptide: Multifunctional CCA protein (410 aa).

ATP is bound by residues glycine 8 and arginine 11. 2 residues coordinate CTP: glycine 8 and arginine 11. Residues aspartate 21 and aspartate 23 each coordinate Mg(2+). Positions 91, 138, and 141 each coordinate ATP. CTP contacts are provided by arginine 91, arginine 138, and arginine 141. The region spanning 229–347 (TGIHQEMVSD…AQLALVCEAD (119 aa)) is the HD domain.

Belongs to the tRNA nucleotidyltransferase/poly(A) polymerase family. Bacterial CCA-adding enzyme type 1 subfamily. Monomer. Can also form homodimers and oligomers. It depends on Mg(2+) as a cofactor. Ni(2+) serves as cofactor.

The catalysed reaction is a tRNA precursor + 2 CTP + ATP = a tRNA with a 3' CCA end + 3 diphosphate. It catalyses the reaction a tRNA with a 3' CCA end + 2 CTP + ATP = a tRNA with a 3' CCACCA end + 3 diphosphate. In terms of biological role, catalyzes the addition and repair of the essential 3'-terminal CCA sequence in tRNAs without using a nucleic acid template. Adds these three nucleotides in the order of C, C, and A to the tRNA nucleotide-73, using CTP and ATP as substrates and producing inorganic pyrophosphate. tRNA 3'-terminal CCA addition is required both for tRNA processing and repair. Also involved in tRNA surveillance by mediating tandem CCA addition to generate a CCACCA at the 3' terminus of unstable tRNAs. While stable tRNAs receive only 3'-terminal CCA, unstable tRNAs are marked with CCACCA and rapidly degraded. The polypeptide is Multifunctional CCA protein (Xanthomonas euvesicatoria pv. vesicatoria (strain 85-10) (Xanthomonas campestris pv. vesicatoria)).